The following is a 301-amino-acid chain: GTPase IMAP family member 3 (301 aa).

Residues 1 to 279 (METLQNVVTG…GKKLEVLHSD (279 aa)) lie on the Cytoplasmic side of the membrane. In terms of domain architecture, AIG1-type G spans 20–223 (SRPLRILLVG…HSNDLFLHAE (204 aa)). Residues 29–37 (GKSGCGKSA), S50, 147–149 (RKE), and N184 each bind GTP. A required for targeting to the endoplasmic reticulum region spans residues 263-301 (VLKVLPIGKKLEVLHSDFCWYLVLAILIFFVFFFLLFYV). Residues 280-300 (FCWYLVLAILIFFVFFFLLFY) traverse the membrane as a helical; Anchor for type IV membrane protein segment. Position 301 (V301) is a topological domain, lumenal.

This sequence belongs to the TRAFAC class TrmE-Era-EngA-EngB-Septin-like GTPase superfamily. AIG1/Toc34/Toc159-like paraseptin GTPase family. IAN subfamily. As to quaternary structure, interacts with BAD, BAK1, BAX, BCL2, BCL2L1/Bcl-xL and BCL2L11/BimEL. The interaction with BAX is increased, when cells initiate apoptosis upon IL2 withdrawal. Expressed in thymus (in thymocytes), spleen (in splenocytes), lymph node and, at lower levels, in lung. Highly expressed in T lymphocytes.

The protein localises to the endoplasmic reticulum membrane. In terms of biological role, during thymocyte development, may support the positive selection of CD4 and CD8 T cells. May play a role in mitochondrial DNA segregation in hematopoietic tissues. Binds GTP. The sequence is that of GTPase IMAP family member 3 (Gimap3) from Mus musculus (Mouse).